We begin with the raw amino-acid sequence, 238 residues long: Complement C1q-like protein 4 (238 aa).

Positions 1–15 (MVLLLLVAIPLLVHS) are cleaved as a signal peptide. The interval 37-102 (SRGQGPDGAP…PGPGPGGAAP (66 aa)) is disordered. One can recognise a Collagen-like domain in the interval 53-96 (PPGAKGEVGRRGKAGLRGPPGPPGPRGPPGEPGRPGPPGPPGPG). Residues 71 to 96 (PPGPPGPRGPPGEPGRPGPPGPPGPG) are compositionally biased toward pro residues. Positions 105 to 238 (GYVPRIAFYA…TFSGFIIYPD (134 aa)) constitute a C1q domain.

In terms of assembly, forms homooligomers, predominantly dimers or trimers. Forms heterooligomers with C1QL1, C1QL2 and C1QL3, when proteins are coexpressed; this interaction does not occur after secretion. Interacts with ADGRB3. In terms of tissue distribution, highly expressed in testis and adipose tissue, brown adipose tissue expressing higher levels than subcutaneous and visceral white adipose tissue. In gonadal fat pad, expressed at lower levels in adipocytes than in the stromal vascular fraction (VSP), which contains preadipocytes, fibroblasts, endothelial cells and occasional immune cells. Expression exhibits sexually dimorphism, with higher levels in females than in males.

It localises to the secreted. Functionally, may regulate the number of excitatory synapses that are formed on hippocampus neurons. Has no effect on inhibitory synapses. May inhibit adipocyte differentiation at an early stage of the process. This is Complement C1q-like protein 4 (C1ql4) from Mus musculus (Mouse).